The primary structure comprises 570 residues: Adenine deaminase (570 aa).

Belongs to the metallo-dependent hydrolases superfamily. Adenine deaminase family. The cofactor is Mn(2+).

The catalysed reaction is adenine + H2O + H(+) = hypoxanthine + NH4(+). The polypeptide is Adenine deaminase (Oleidesulfovibrio alaskensis (strain ATCC BAA-1058 / DSM 17464 / G20) (Desulfovibrio alaskensis)).